The chain runs to 335 residues: Methionine import ATP-binding protein MetN 1 (335 aa).

An ABC transporter domain is found at 2 to 242 (IEFHNVHKTY…PQHPTTRRFV (241 aa)). 38–45 (GHSGAGKS) lines the ATP pocket.

This sequence belongs to the ABC transporter superfamily. Methionine importer (TC 3.A.1.24) family. The complex is composed of two ATP-binding proteins (MetN), two transmembrane proteins (MetI) and a solute-binding protein (MetQ).

The protein resides in the cell inner membrane. The enzyme catalyses L-methionine(out) + ATP + H2O = L-methionine(in) + ADP + phosphate + H(+). The catalysed reaction is D-methionine(out) + ATP + H2O = D-methionine(in) + ADP + phosphate + H(+). In terms of biological role, part of the ABC transporter complex MetNIQ involved in methionine import. Responsible for energy coupling to the transport system. The polypeptide is Methionine import ATP-binding protein MetN 1 (Pseudomonas savastanoi pv. phaseolicola (strain 1448A / Race 6) (Pseudomonas syringae pv. phaseolicola (strain 1448A / Race 6))).